The chain runs to 81 residues: Photosystem I iron-sulfur center (81 aa).

4Fe-4S ferredoxin-type domains lie at 2-31 (AHSVKIYDTCIGCTQCVRACPTDVLEMVPW) and 39-68 (IASAPRTEDCVGCKRCESACPTDYLSVRVY). 8 residues coordinate [4Fe-4S] cluster: cysteine 11, cysteine 14, cysteine 17, cysteine 21, cysteine 48, cysteine 51, cysteine 54, and cysteine 58.

As to quaternary structure, the eukaryotic PSI reaction center is composed of at least 11 subunits. The cofactor is [4Fe-4S] cluster.

The protein localises to the plastid. It localises to the chloroplast thylakoid membrane. The enzyme catalyses reduced [plastocyanin] + hnu + oxidized [2Fe-2S]-[ferredoxin] = oxidized [plastocyanin] + reduced [2Fe-2S]-[ferredoxin]. Functionally, apoprotein for the two 4Fe-4S centers FA and FB of photosystem I (PSI); essential for photochemical activity. FB is the terminal electron acceptor of PSI, donating electrons to ferredoxin. The C-terminus interacts with PsaA/B/D and helps assemble the protein into the PSI complex. Required for binding of PsaD and PsaE to PSI. PSI is a plastocyanin-ferredoxin oxidoreductase, converting photonic excitation into a charge separation, which transfers an electron from the donor P700 chlorophyll pair to the spectroscopically characterized acceptors A0, A1, FX, FA and FB in turn. The polypeptide is Photosystem I iron-sulfur center (Gnetum gnemon (Spanish joint-fir)).